The sequence spans 107 residues: U1-lycotoxin-Ls1e (107 aa).

An N-terminal signal peptide occupies residues 1-20 (MMKVLVVVALLVTLISYSSS). A propeptide spanning residues 21–41 (EGIDDLEADELLSLMANEQTR) is cleaved from the precursor. 4 disulfides stabilise this stretch: Cys44-Cys59, Cys51-Cys68, Cys58-Cys86, and Cys70-Cys84.

This sequence belongs to the neurotoxin 19 (CSTX) family. 04 (U1-Lctx) subfamily. As to expression, expressed by the venom gland.

The protein resides in the secreted. This chain is U1-lycotoxin-Ls1e, found in Lycosa singoriensis (Wolf spider).